A 372-amino-acid polypeptide reads, in one-letter code: 4-hydroxy-3-methylbut-2-en-1-yl diphosphate synthase (flavodoxin) (372 aa).

4 residues coordinate [4Fe-4S] cluster: Cys270, Cys273, Cys305, and Glu312.

Belongs to the IspG family. [4Fe-4S] cluster is required as a cofactor.

The enzyme catalyses (2E)-4-hydroxy-3-methylbut-2-enyl diphosphate + oxidized [flavodoxin] + H2O + 2 H(+) = 2-C-methyl-D-erythritol 2,4-cyclic diphosphate + reduced [flavodoxin]. It functions in the pathway isoprenoid biosynthesis; isopentenyl diphosphate biosynthesis via DXP pathway; isopentenyl diphosphate from 1-deoxy-D-xylulose 5-phosphate: step 5/6. Functionally, converts 2C-methyl-D-erythritol 2,4-cyclodiphosphate (ME-2,4cPP) into 1-hydroxy-2-methyl-2-(E)-butenyl 4-diphosphate. This Salmonella paratyphi B (strain ATCC BAA-1250 / SPB7) protein is 4-hydroxy-3-methylbut-2-en-1-yl diphosphate synthase (flavodoxin).